The primary structure comprises 411 residues: Imidazolonepropionase (411 aa).

Residues H78 and H80 each coordinate Fe(3+). Residues H78 and H80 each coordinate Zn(2+). 4-imidazolone-5-propanoate contacts are provided by R87, Y150, and H183. Y150 is an N-formimidoyl-L-glutamate binding site. H248 lines the Fe(3+) pocket. H248 serves as a coordination point for Zn(2+). Q251 contacts 4-imidazolone-5-propanoate. D322 is a binding site for Fe(3+). D322 contributes to the Zn(2+) binding site. Positions 324 and 326 each coordinate N-formimidoyl-L-glutamate. S327 contacts 4-imidazolone-5-propanoate.

Belongs to the metallo-dependent hydrolases superfamily. HutI family. Requires Zn(2+) as cofactor. Fe(3+) is required as a cofactor.

It is found in the cytoplasm. It carries out the reaction 4-imidazolone-5-propanoate + H2O = N-formimidoyl-L-glutamate. It functions in the pathway amino-acid degradation; L-histidine degradation into L-glutamate; N-formimidoyl-L-glutamate from L-histidine: step 3/3. Functionally, catalyzes the hydrolytic cleavage of the carbon-nitrogen bond in imidazolone-5-propanoate to yield N-formimidoyl-L-glutamate. It is the third step in the universal histidine degradation pathway. The sequence is that of Imidazolonepropionase from Christiangramia forsetii (strain DSM 17595 / CGMCC 1.15422 / KT0803) (Gramella forsetii).